The chain runs to 156 residues: ATP synthase subunit b (156 aa).

The helical transmembrane segment at 12-32 threads the bilayer; the sequence is VAFLIFVLFCMKFVWPPVIAA.

It belongs to the ATPase B chain family. As to quaternary structure, F-type ATPases have 2 components, F(1) - the catalytic core - and F(0) - the membrane proton channel. F(1) has five subunits: alpha(3), beta(3), gamma(1), delta(1), epsilon(1). F(0) has three main subunits: a(1), b(2) and c(10-14). The alpha and beta chains form an alternating ring which encloses part of the gamma chain. F(1) is attached to F(0) by a central stalk formed by the gamma and epsilon chains, while a peripheral stalk is formed by the delta and b chains.

Its subcellular location is the cell inner membrane. In terms of biological role, f(1)F(0) ATP synthase produces ATP from ADP in the presence of a proton or sodium gradient. F-type ATPases consist of two structural domains, F(1) containing the extramembraneous catalytic core and F(0) containing the membrane proton channel, linked together by a central stalk and a peripheral stalk. During catalysis, ATP synthesis in the catalytic domain of F(1) is coupled via a rotary mechanism of the central stalk subunits to proton translocation. Functionally, component of the F(0) channel, it forms part of the peripheral stalk, linking F(1) to F(0). This chain is ATP synthase subunit b, found in Pseudomonas fluorescens (strain Pf0-1).